The sequence spans 155 residues: Small ribosomal subunit protein uS7c (155 aa).

The protein belongs to the universal ribosomal protein uS7 family. Part of the 30S ribosomal subunit.

Its subcellular location is the plastid. It localises to the chloroplast. Functionally, one of the primary rRNA binding proteins, it binds directly to 16S rRNA where it nucleates assembly of the head domain of the 30S subunit. The protein is Small ribosomal subunit protein uS7c (rps7) of Allium textile (Textile onion).